A 246-amino-acid chain; its full sequence is Ribonuclease 3 (246 aa).

Residues 18–147 (FQELQKKIGI…FIGALYLDQG (130 aa)) enclose the RNase III domain. Glu-60 serves as a coordination point for Mg(2+). Asp-64 is a catalytic residue. Mg(2+) contacts are provided by Asp-133 and Glu-136. The active site involves Glu-136. Residues 173–242 (DFKSQLQELV…AQMALETLRA (70 aa)) enclose the DRBM domain.

Belongs to the ribonuclease III family. Homodimer. The cofactor is Mg(2+).

It is found in the cytoplasm. The enzyme catalyses Endonucleolytic cleavage to 5'-phosphomonoester.. Functionally, digests double-stranded RNA. Involved in the processing of primary rRNA transcript to yield the immediate precursors to the large and small rRNAs (23S and 16S). Processes some mRNAs, and tRNAs when they are encoded in the rRNA operon. Processes pre-crRNA and tracrRNA of type II CRISPR loci if present in the organism. This is Ribonuclease 3 from Geobacillus thermodenitrificans (strain NG80-2).